Reading from the N-terminus, the 268-residue chain is Putative cysteine-rich repeat secretory protein 5 (268 aa).

The first 24 residues, 1–24, serve as a signal peptide directing secretion; that stretch reads MTGINTHFAVALFCFFSFSLRAMS. 2 consecutive Gnk2-homologous domains span residues 27–129 and 135–248; these read SQML…NVSF and DVPS…ISAL.

The protein belongs to the cysteine-rich repeat secretory protein family.

Its subcellular location is the secreted. This chain is Putative cysteine-rich repeat secretory protein 5 (CRRSP5), found in Arabidopsis thaliana (Mouse-ear cress).